The primary structure comprises 463 residues: Interferon-inducible GTPase 5 (463 aa).

The region spanning 53–235 (IRLEVGVTGE…PTLVSTWEHD (183 aa)) is the IRG-type G domain. GTP contacts are provided by residues 62 to 69 (ESGAGKSS), 87 to 91 (TGVME), 169 to 171 (KVD), and 216 to 218 (SNL). Ser-247 and Ser-304 each carry phosphoserine. Residues 404–437 (LEDDEPQPEVSLEVASDNGVEKGGSGEGGGEEAP) are disordered.

It belongs to the TRAFAC class dynamin-like GTPase superfamily. IRG family. As to expression, abundantly expressed in semen (at protein level).

The protein resides in the cell projection. It is found in the cilium. Its subcellular location is the flagellum. The protein localises to the lipid droplet. The enzyme catalyses GTP + H2O = GDP + phosphate + H(+). In terms of biological role, required for sperm motility and therefore male fertility, via positive regulation of spermatozoa fibrous sheath formation. In Homo sapiens (Human), this protein is Interferon-inducible GTPase 5.